The primary structure comprises 294 residues: Shikimate dehydrogenase (NADP(+)) (294 aa).

Shikimate-binding positions include 25-27 and threonine 72; that span reads SAS. Lysine 76 functions as the Proton acceptor in the catalytic mechanism. The shikimate site is built by asparagine 97 and aspartate 112. NADP(+) is bound by residues 136–140 and threonine 234; that span reads GAGGA. Residue tyrosine 236 participates in shikimate binding. Residue glycine 257 coordinates NADP(+).

It belongs to the shikimate dehydrogenase family. As to quaternary structure, homodimer.

It catalyses the reaction shikimate + NADP(+) = 3-dehydroshikimate + NADPH + H(+). The protein operates within metabolic intermediate biosynthesis; chorismate biosynthesis; chorismate from D-erythrose 4-phosphate and phosphoenolpyruvate: step 4/7. Involved in the biosynthesis of the chorismate, which leads to the biosynthesis of aromatic amino acids. Catalyzes the reversible NADPH linked reduction of 3-dehydroshikimate (DHSA) to yield shikimate (SA). The polypeptide is Shikimate dehydrogenase (NADP(+)) (Symbiobacterium thermophilum (strain DSM 24528 / JCM 14929 / IAM 14863 / T)).